A 479-amino-acid chain; its full sequence is Adenylate kinase 8 (479 aa).

Adenylate kinase stretches follow at residues 58–258 (PKVV…TYVQ) and 269–471 (PKVL…SGII). 67 to 72 (ASGKTT) is a binding site for ATP. Positions 87-113 (TKESLLEREFSRLSVEAKSYYQVYKKI) are NMP 1. AMP is bound by residues 140 to 143 (GIPE), Gln147, and Arg203. The segment at 177–206 (GKRIDPVTGEIYHTTFDWPPEPEIQNRLRQ) is LID 1. Residue 278 to 283 (GSGKRL) participates in ATP binding. The interval 298-327 (SCGQLLKEAVAAKSSFGELIQPFFEKRMTV) is NMP 2. Residues 325 to 327 (MTV), 354 to 357 (GFPR), and Gln361 each bind AMP. Residues 391–424 (LRRTDPVTGERFHLMYKPPPTIEVQVRLLQNPKD) are LID 2. Arg392 lines the ATP pocket.

The protein belongs to the adenylate kinase family. Interacts with CFAP45 and CFAP52; CFAP45 and AK8 dimerization may create a cavity at the interface of the dimer that can accommodate AMP.

The protein localises to the cytoplasm. The protein resides in the cytosol. It localises to the cytoskeleton. Its subcellular location is the cilium axoneme. It catalyses the reaction AMP + ATP = 2 ADP. It carries out the reaction a 2'-deoxyribonucleoside 5'-diphosphate + ATP = a 2'-deoxyribonucleoside 5'-triphosphate + ADP. The enzyme catalyses a ribonucleoside 5'-diphosphate + ATP = a ribonucleoside 5'-triphosphate + ADP. Its function is as follows. Nucleoside monophosphate (NMP) kinase that catalyzes the reversible transfer of the terminal phosphate group between nucleoside triphosphates and monophosphates. Has highest activity toward AMP, and weaker activity toward dAMP, CMP and dCMP. Also displays broad nucleoside diphosphate kinase activity. The sequence is that of Adenylate kinase 8 (Ak8) from Mus musculus (Mouse).